The primary structure comprises 157 residues: MEKSFTHIEAGRARMVDISEKNDVSRLARAAGEIVLSAETLEKIRTGTVEKGNVFATARVAAVLAVKKTPETIPMCHQIPITGIDVDFEIGEEAVSAVVEVRTVGKTGVEMEALTGVSSALLTVWDMVKSAEKDEIGNYPHTLIRNIRVLEKLKGKA.

Substrate is bound by residues 75–77 and 111–112; these read MCH and ME. Residue aspartate 126 is part of the active site.

This sequence belongs to the MoaC family. In terms of assembly, homohexamer; trimer of dimers.

The enzyme catalyses (8S)-3',8-cyclo-7,8-dihydroguanosine 5'-triphosphate = cyclic pyranopterin phosphate + diphosphate. The protein operates within cofactor biosynthesis; molybdopterin biosynthesis. Functionally, catalyzes the conversion of (8S)-3',8-cyclo-7,8-dihydroguanosine 5'-triphosphate to cyclic pyranopterin monophosphate (cPMP). This is Probable cyclic pyranopterin monophosphate synthase from Methanosarcina mazei (strain ATCC BAA-159 / DSM 3647 / Goe1 / Go1 / JCM 11833 / OCM 88) (Methanosarcina frisia).